The primary structure comprises 506 residues: Anaerobic nitric oxide reductase transcription regulator NorR (506 aa).

Asp57 is modified (4-aspartylphosphate). One can recognise a Sigma-54 factor interaction domain in the interval 187–416 (MIGLSPAMTQ…LEHAIHRAVV (230 aa)). ATP-binding positions include 215 to 222 (GETGTGKE) and 278 to 287 (ADNGTLFLDE). Residues 481–500 (WAASARALETDVANLHRLAK) constitute a DNA-binding region (H-T-H motif).

It participates in nitrogen metabolism; nitric oxide reduction. In terms of biological role, required for the expression of anaerobic nitric oxide (NO) reductase, acts as a transcriptional activator for at least the norVW operon. Activation also requires sigma-54. In Salmonella newport (strain SL254), this protein is Anaerobic nitric oxide reductase transcription regulator NorR.